Reading from the N-terminus, the 420-residue chain is Gamma-glutamyl phosphate reductase (420 aa).

It belongs to the gamma-glutamyl phosphate reductase family.

The protein localises to the cytoplasm. It catalyses the reaction L-glutamate 5-semialdehyde + phosphate + NADP(+) = L-glutamyl 5-phosphate + NADPH + H(+). Its pathway is amino-acid biosynthesis; L-proline biosynthesis; L-glutamate 5-semialdehyde from L-glutamate: step 2/2. Catalyzes the NADPH-dependent reduction of L-glutamate 5-phosphate into L-glutamate 5-semialdehyde and phosphate. The product spontaneously undergoes cyclization to form 1-pyrroline-5-carboxylate. This Alkalilimnicola ehrlichii (strain ATCC BAA-1101 / DSM 17681 / MLHE-1) protein is Gamma-glutamyl phosphate reductase.